The chain runs to 303 residues: D-alanine--D-alanine ligase (303 aa).

An ATP-grasp domain is found at 103–293; that stretch reads KTLFIKGGIP…FAQLCEKILE (191 aa). 130–179 provides a ligand contact to ATP; it reads PYVIKPSRQGSSIGIEFVYDIKELDQAIKKSTQYDHVVLAEALITGKELT. Asp-247, Glu-260, and Asn-262 together coordinate Mg(2+).

Belongs to the D-alanine--D-alanine ligase family. The cofactor is Mg(2+). Requires Mn(2+) as cofactor.

It localises to the cytoplasm. The catalysed reaction is 2 D-alanine + ATP = D-alanyl-D-alanine + ADP + phosphate + H(+). The protein operates within cell wall biogenesis; peptidoglycan biosynthesis. Cell wall formation. This is D-alanine--D-alanine ligase from Methylacidiphilum infernorum (isolate V4) (Methylokorus infernorum (strain V4)).